The sequence spans 423 residues: Histidine--tRNA ligase (423 aa).

This sequence belongs to the class-II aminoacyl-tRNA synthetase family. In terms of assembly, homodimer.

The protein resides in the cytoplasm. It carries out the reaction tRNA(His) + L-histidine + ATP = L-histidyl-tRNA(His) + AMP + diphosphate + H(+). The protein is Histidine--tRNA ligase of Rhodococcus erythropolis (strain PR4 / NBRC 100887).